The chain runs to 556 residues: Arginine--tRNA ligase (556 aa).

Positions 132–142 match the 'HIGH' region motif; sequence ANPTGDLHLGH.

Belongs to the class-I aminoacyl-tRNA synthetase family. As to quaternary structure, monomer.

It is found in the cytoplasm. It carries out the reaction tRNA(Arg) + L-arginine + ATP = L-arginyl-tRNA(Arg) + AMP + diphosphate. The protein is Arginine--tRNA ligase of Listeria monocytogenes serotype 4b (strain CLIP80459).